Consider the following 85-residue polypeptide: Alpha-mammal toxin AaH2 (85 aa).

The first 19 residues, 1-19, serve as a signal peptide directing secretion; that stretch reads MNYLVMISLALLFVTGVES. The LCN-type CS-alpha/beta domain maps to 21–83; it reads KDGYIVDDVN…VRTKGPGRCH (63 aa). 4 disulfides stabilise this stretch: Cys-31/Cys-82, Cys-35/Cys-55, Cys-41/Cys-65, and Cys-45/Cys-67. At His-83 the chain carries Histidine amide.

This sequence belongs to the long (4 C-C) scorpion toxin superfamily. Sodium channel inhibitor family. Alpha subfamily. In terms of processing, the amidation of His-83 is not necessary for toxicity. As to expression, expressed by the venom gland.

It localises to the secreted. Its function is as follows. Alpha toxin that binds voltage-independently at site-3 of sodium channels (Nav), inhibits the inactivation of the activated channels, and weakly inhibits activation, thereby blocking neuronal transmission. Inserts into voltage-sensing domain IV to stabilize a deactivated state, thereby preventing fast-inactivation. Principally slows the inactivation process of TTX-sensitive sodium channels. It is active on mammalian brain Nav1.2/SCN2A (EC(50)human=0.72 nM, EC(50)rat=2.6 nM), on rat skeletal muscle Nav1.4/SCN4A (EC(50)=2.2 nM), and on human neuronal Nav1.7/SCN9A (EC(50)=6.8-51.7 nM). In vivo, intraplantar injection into mice induces spontaneous pain responses. The chain is Alpha-mammal toxin AaH2 from Androctonus australis (Sahara scorpion).